A 162-amino-acid chain; its full sequence is Nucleotide-binding protein ACIAD3137 (162 aa).

The protein belongs to the YajQ family.

Functionally, nucleotide-binding protein. In Acinetobacter baylyi (strain ATCC 33305 / BD413 / ADP1), this protein is Nucleotide-binding protein ACIAD3137.